We begin with the raw amino-acid sequence, 43 residues long: Probable intron-encoded DNA endonuclease 2 (43 aa).

Belongs to the LAGLIDADG endonuclease family.

It is found in the mitochondrion. Functionally, mitochondrial DNA endonuclease involved in intron homing. The chain is Probable intron-encoded DNA endonuclease 2 (hegI2) from Mycosarcoma maydis (Corn smut fungus).